Here is a 246-residue protein sequence, read N- to C-terminus: DNA repair protein RecO (246 aa).

It belongs to the RecO family.

Functionally, involved in DNA repair and RecF pathway recombination. The protein is DNA repair protein RecO of Nitrosococcus oceani (strain ATCC 19707 / BCRC 17464 / JCM 30415 / NCIMB 11848 / C-107).